Here is a 99-residue protein sequence, read N- to C-terminus: Large ribosomal subunit protein bL21 (99 aa).

It belongs to the bacterial ribosomal protein bL21 family. Part of the 50S ribosomal subunit. Contacts protein L20.

Functionally, this protein binds to 23S rRNA in the presence of protein L20. The protein is Large ribosomal subunit protein bL21 of Mycoplasmopsis agalactiae (strain NCTC 10123 / CIP 59.7 / PG2) (Mycoplasma agalactiae).